The following is a 439-amino-acid chain: Xaa-Pro dipeptidase (439 aa).

The Mn(2+) site is built by aspartate 244, aspartate 255, histidine 335, glutamate 380, and glutamate 419.

This sequence belongs to the peptidase M24B family. Bacterial-type prolidase subfamily. Requires Mn(2+) as cofactor.

The catalysed reaction is Xaa-L-Pro dipeptide + H2O = an L-alpha-amino acid + L-proline. Splits dipeptides with a prolyl residue in the C-terminal position. In Shewanella amazonensis (strain ATCC BAA-1098 / SB2B), this protein is Xaa-Pro dipeptidase.